A 227-amino-acid polypeptide reads, in one-letter code: Cytochrome c oxidase subunit 2 (227 aa).

The Mitochondrial intermembrane segment spans residues 1 to 14; it reads MAYPFQLGFQDATS. The chain crosses the membrane as a helical span at residues 15–45; it reads PIMEELLHFHDHTLMIVFLISSLVLYIISSM. Over 46 to 59 the chain is Mitochondrial matrix; sequence LTTKLTHTSTMDAQ. Residues 60–87 traverse the membrane as a helical segment; that stretch reads EVETIWTILPAIILILIALPSLRILYMM. Over 88 to 227 the chain is Mitochondrial intermembrane; that stretch reads DEINNPSLTV…YFEEWSASML (140 aa). Residues His161, Cys196, Glu198, Cys200, His204, and Met207 each coordinate Cu cation. Glu198 is a Mg(2+) binding site.

It belongs to the cytochrome c oxidase subunit 2 family. In terms of assembly, component of the cytochrome c oxidase (complex IV, CIV), a multisubunit enzyme composed of 14 subunits. The complex is composed of a catalytic core of 3 subunits MT-CO1, MT-CO2 and MT-CO3, encoded in the mitochondrial DNA, and 11 supernumerary subunits COX4I, COX5A, COX5B, COX6A, COX6B, COX6C, COX7A, COX7B, COX7C, COX8 and NDUFA4, which are encoded in the nuclear genome. The complex exists as a monomer or a dimer and forms supercomplexes (SCs) in the inner mitochondrial membrane with NADH-ubiquinone oxidoreductase (complex I, CI) and ubiquinol-cytochrome c oxidoreductase (cytochrome b-c1 complex, complex III, CIII), resulting in different assemblies (supercomplex SCI(1)III(2)IV(1) and megacomplex MCI(2)III(2)IV(2)). Found in a complex with TMEM177, COA6, COX18, COX20, SCO1 and SCO2. Interacts with TMEM177 in a COX20-dependent manner. Interacts with COX20. Interacts with COX16. Cu cation is required as a cofactor.

The protein localises to the mitochondrion inner membrane. It carries out the reaction 4 Fe(II)-[cytochrome c] + O2 + 8 H(+)(in) = 4 Fe(III)-[cytochrome c] + 2 H2O + 4 H(+)(out). Its function is as follows. Component of the cytochrome c oxidase, the last enzyme in the mitochondrial electron transport chain which drives oxidative phosphorylation. The respiratory chain contains 3 multisubunit complexes succinate dehydrogenase (complex II, CII), ubiquinol-cytochrome c oxidoreductase (cytochrome b-c1 complex, complex III, CIII) and cytochrome c oxidase (complex IV, CIV), that cooperate to transfer electrons derived from NADH and succinate to molecular oxygen, creating an electrochemical gradient over the inner membrane that drives transmembrane transport and the ATP synthase. Cytochrome c oxidase is the component of the respiratory chain that catalyzes the reduction of oxygen to water. Electrons originating from reduced cytochrome c in the intermembrane space (IMS) are transferred via the dinuclear copper A center (CU(A)) of subunit 2 and heme A of subunit 1 to the active site in subunit 1, a binuclear center (BNC) formed by heme A3 and copper B (CU(B)). The BNC reduces molecular oxygen to 2 water molecules using 4 electrons from cytochrome c in the IMS and 4 protons from the mitochondrial matrix. The sequence is that of Cytochrome c oxidase subunit 2 (MT-CO2) from Equus asinus (Donkey).